The sequence spans 3065 residues: MAX gene-associated protein (3065 aa).

Residues Lys-4 and Lys-178 each participate in a glycyl lysine isopeptide (Lys-Gly) (interchain with G-Cter in SUMO2) cross-link. Residues Met-84 to Asp-260 constitute a DNA-binding region (T-box). Basic and acidic residues predominate over residues Arg-259–Ser-277. The interval Arg-259–Glu-322 is disordered. Positions Asp-278–Gly-289 are enriched in polar residues. Positions Pro-309–Glu-322 are enriched in basic and acidic residues. Glycyl lysine isopeptide (Lys-Gly) (interchain with G-Cter in SUMO2) cross-links involve residues Lys-323, Lys-329, Lys-349, Lys-432, Lys-460, Lys-465, and Lys-482. Phosphoserine is present on Ser-534. A Glycyl lysine isopeptide (Lys-Gly) (interchain with G-Cter in SUMO2) cross-link involves residue Lys-570. The interval Gln-604–Val-653 is disordered. Phosphoserine is present on Ser-607. Lys-613 is covalently cross-linked (Glycyl lysine isopeptide (Lys-Gly) (interchain with G-Cter in SUMO2)). Residues Lys-613–Lys-624 show a composition bias toward basic residues. Residues Thr-632–Ser-648 are compositionally biased toward polar residues. At Ser-645 the chain carries Phosphoserine. Residues Lys-654, Lys-785, Lys-791, Lys-817, and Lys-826 each participate in a glycyl lysine isopeptide (Lys-Gly) (interchain with G-Cter in SUMO2) cross-link. Ser-851 carries the post-translational modification Phosphoserine. The segment at Ser-881 to Thr-911 is disordered. The segment covering Gln-901 to Thr-911 has biased composition (polar residues). Ser-924 is subject to Phosphoserine. A Glycyl lysine isopeptide (Lys-Gly) (interchain with G-Cter in SUMO2) cross-link involves residue Lys-928. Residues Arg-971 to Lys-990 are disordered. The span at Gln-972–Gln-981 shows a compositional bias: low complexity. Residues Lys-990, Lys-1091, Lys-1140, Lys-1162, Lys-1199, and Lys-1207 each participate in a glycyl lysine isopeptide (Lys-Gly) (interchain with G-Cter in SUMO2) cross-link. The stretch at Tyr-1111–Glu-1147 forms a coiled coil. Residue Ser-1208 is modified to Phosphoserine. 2 disordered regions span residues Arg-1246–Pro-1332 and Arg-1380–Ile-1429. 2 stretches are compositionally biased toward low complexity: residues Gln-1253–Ser-1269 and Lys-1310–Ser-1322. Ser-1430 and Ser-1457 each carry phosphoserine. Glycyl lysine isopeptide (Lys-Gly) (interchain with G-Cter in SUMO2) cross-links involve residues Lys-1461 and Lys-1502. Disordered regions lie at residues Ser-1488 to Asn-1517, Ser-1905 to Gly-1927, and Gln-1967 to Gly-2029. 2 stretches are compositionally biased toward polar residues: residues Leu-1495 to Pro-1514 and Ser-1911 to Gly-1927. Residues Met-1968–Leu-1994 are compositionally biased toward basic and acidic residues. Glycyl lysine isopeptide (Lys-Gly) (interchain with G-Cter in SUMO2) cross-links involve residues Lys-1985 and Lys-1992. Positions Ile-2008 to Asp-2023 are enriched in polar residues. Residues Lys-2103, Lys-2113, Lys-2135, Lys-2139, Lys-2146, Lys-2159, Lys-2194, Lys-2206, and Lys-2238 each participate in a glycyl lysine isopeptide (Lys-Gly) (interchain with G-Cter in SUMO2) cross-link. The interval Arg-2258–Ile-2316 is disordered. Arg-2265 bears the Omega-N-methylarginine mark. A Glycyl lysine isopeptide (Lys-Gly) (interchain with G-Cter in SUMO2) cross-link involves residue Lys-2284. Residues Asp-2300 to Ile-2316 are compositionally biased toward acidic residues. Glycyl lysine isopeptide (Lys-Gly) (interchain with G-Cter in SUMO2) cross-links involve residues Lys-2378, Lys-2413, Lys-2457, and Lys-2532. A bHLH domain is found at Tyr-2423 to Leu-2474. Ser-2541 carries the post-translational modification Phosphoserine. Residue Lys-2546 forms a Glycyl lysine isopeptide (Lys-Gly) (interchain with G-Cter in SUMO2) linkage. Positions Lys-2576 to Asn-2595 are disordered. Polar residues predominate over residues Thr-2581 to Asn-2595. Residues Lys-2629, Lys-2679, Lys-2698, and Lys-2784 each participate in a glycyl lysine isopeptide (Lys-Gly) (interchain with G-Cter in SUMO2) cross-link. The segment at Gly-2668 to Gly-2709 is disordered. The span at Tyr-2671–Gly-2709 shows a compositional bias: basic and acidic residues. Residues Asp-2817–Ser-2841 adopt a coiled-coil conformation. 2 positions are modified to phosphoserine: Ser-2910 and Ser-2921. Positions Ala-2944–His-2968 are disordered. At Ser-2978 the chain carries Phosphoserine. Lys-3041 is covalently cross-linked (Glycyl lysine isopeptide (Lys-Gly) (interchain with G-Cter in SUMO2)).

Interacts with MAX. Requires dimerization with MAX for E-box binding. Component of some MLL1/MLL complex, at least composed of the core components KMT2A/MLL1, ASH2L, HCFC1/HCF1, WDR5 and RBBP5, as well as the facultative components BACC1, CHD8, E2F6, HSP70, INO80C, KANSL1, LAS1L, MAX, MCRS1, MGA, MYST1/MOF, PELP1, PHF20, PRP31, RING2, RUVB1/TIP49A, RUVB2/TIP49B, SENP3, TAF1, TAF4, TAF6, TAF7, TAF9 and TEX10. Interacts with ZMYND11. In terms of tissue distribution, highly expressed in germ cells and granulosa cells.

It is found in the nucleus. Its function is as follows. Functions as a dual-specificity transcription factor, regulating the expression of both MAX-network and T-box family target genes. Functions as a repressor or an activator. Binds to 5'-AATTTCACACCTAGGTGTGAAATT-3' core sequence and seems to regulate MYC-MAX target genes. Suppresses transcriptional activation by MYC and inhibits MYC-dependent cell transformation. Function activated by heterodimerization with MAX. This heterodimerization serves the dual function of both generating an E-box-binding heterodimer and simultaneously blocking interaction of a corepressor. The chain is MAX gene-associated protein from Homo sapiens (Human).